The following is a 249-amino-acid chain: Ubiquinone/menaquinone biosynthesis C-methyltransferase UbiE (249 aa).

Residues T74, D93, and D121–A122 each bind S-adenosyl-L-methionine.

The protein belongs to the class I-like SAM-binding methyltransferase superfamily. MenG/UbiE family.

The catalysed reaction is a 2-demethylmenaquinol + S-adenosyl-L-methionine = a menaquinol + S-adenosyl-L-homocysteine + H(+). It catalyses the reaction a 2-methoxy-6-(all-trans-polyprenyl)benzene-1,4-diol + S-adenosyl-L-methionine = a 5-methoxy-2-methyl-3-(all-trans-polyprenyl)benzene-1,4-diol + S-adenosyl-L-homocysteine + H(+). It participates in quinol/quinone metabolism; menaquinone biosynthesis; menaquinol from 1,4-dihydroxy-2-naphthoate: step 2/2. The protein operates within cofactor biosynthesis; ubiquinone biosynthesis. Its function is as follows. Methyltransferase required for the conversion of demethylmenaquinol (DMKH2) to menaquinol (MKH2) and the conversion of 2-polyprenyl-6-methoxy-1,4-benzoquinol (DDMQH2) to 2-polyprenyl-3-methyl-6-methoxy-1,4-benzoquinol (DMQH2). The sequence is that of Ubiquinone/menaquinone biosynthesis C-methyltransferase UbiE from Acidiphilium cryptum (strain JF-5).